The chain runs to 227 residues: Flagellar L-ring protein (227 aa).

The first 16 residues, 1–16 (MRNIILFAAGTLLLSG), serve as a signal peptide directing secretion. The N-palmitoyl cysteine moiety is linked to residue C17. C17 carries S-diacylglycerol cysteine lipidation.

The protein belongs to the FlgH family. The basal body constitutes a major portion of the flagellar organelle and consists of four rings (L,P,S, and M) mounted on a central rod.

The protein resides in the cell outer membrane. The protein localises to the bacterial flagellum basal body. Its function is as follows. Assembles around the rod to form the L-ring and probably protects the motor/basal body from shearing forces during rotation. This is Flagellar L-ring protein from Pseudoalteromonas translucida (strain TAC 125).